Here is a 237-residue protein sequence, read N- to C-terminus: MRPSNRTPAQTRPITITRQFTAHAEGSVLVEFGETKVLCTASFTEGVPRFLKGQGQGWVTAEYGMLPRSTHSRMDREAARGKQSGRTQEIQRLIGRALRACVDMKALGENTIVIDCDVIQADGGTRTASITGACVALVDALNWARGKGIIKSNPLKFLIAAVSVGIYNGEAISDLEYVEDSAAETDMNVVMTETGKIIEIQGTAEGEPFTHEELIELLGLAKNSIREIVDVQKAALN.

Phosphate is bound by residues arginine 86 and 124 to 126; that span reads GTR.

This sequence belongs to the RNase PH family. In terms of assembly, homohexameric ring arranged as a trimer of dimers.

The enzyme catalyses tRNA(n+1) + phosphate = tRNA(n) + a ribonucleoside 5'-diphosphate. Functionally, phosphorolytic 3'-5' exoribonuclease that plays an important role in tRNA 3'-end maturation. Removes nucleotide residues following the 3'-CCA terminus of tRNAs; can also add nucleotides to the ends of RNA molecules by using nucleoside diphosphates as substrates, but this may not be physiologically important. Probably plays a role in initiation of 16S rRNA degradation (leading to ribosome degradation) during starvation. In Shewanella oneidensis (strain ATCC 700550 / JCM 31522 / CIP 106686 / LMG 19005 / NCIMB 14063 / MR-1), this protein is Ribonuclease PH.